The sequence spans 231 residues: Ribose-5-phosphate isomerase A (231 aa).

Substrate-binding positions include 32–35 (TGST), 85–88 (DGAD), and 98–101 (KGGG). The Proton acceptor role is filled by E107. K125 serves as a coordination point for substrate.

The protein belongs to the ribose 5-phosphate isomerase family. As to quaternary structure, homodimer.

The catalysed reaction is aldehydo-D-ribose 5-phosphate = D-ribulose 5-phosphate. It participates in carbohydrate degradation; pentose phosphate pathway; D-ribose 5-phosphate from D-ribulose 5-phosphate (non-oxidative stage): step 1/1. Its function is as follows. Catalyzes the reversible conversion of ribose-5-phosphate to ribulose 5-phosphate. In Paraburkholderia phytofirmans (strain DSM 17436 / LMG 22146 / PsJN) (Burkholderia phytofirmans), this protein is Ribose-5-phosphate isomerase A.